We begin with the raw amino-acid sequence, 182 residues long: Lipoprotein signal peptidase (182 aa).

The next 4 helical transmembrane spans lie at 15–35 (LYIG…FLVI), 44–64 (LEVL…FVFG), 65–85 (AFQD…VFLI), and 97–117 (PWGW…KFFV). Residues Asp-140 and Asp-162 contribute to the active site. Residues 155 to 175 (WPAFNVADSCVTIGLTILIFT) traverse the membrane as a helical segment.

Belongs to the peptidase A8 family.

The protein resides in the cell inner membrane. The enzyme catalyses Release of signal peptides from bacterial membrane prolipoproteins. Hydrolyzes -Xaa-Yaa-Zaa-|-(S,diacylglyceryl)Cys-, in which Xaa is hydrophobic (preferably Leu), and Yaa (Ala or Ser) and Zaa (Gly or Ala) have small, neutral side chains.. The protein operates within protein modification; lipoprotein biosynthesis (signal peptide cleavage). In terms of biological role, this protein specifically catalyzes the removal of signal peptides from prolipoproteins. The sequence is that of Lipoprotein signal peptidase from Leptospira borgpetersenii serovar Hardjo-bovis (strain L550).